A 332-amino-acid polypeptide reads, in one-letter code: Transaldolase (332 aa).

K136 functions as the Schiff-base intermediate with substrate in the catalytic mechanism.

The protein belongs to the transaldolase family. Type 1 subfamily.

The protein localises to the cytoplasm. The enzyme catalyses D-sedoheptulose 7-phosphate + D-glyceraldehyde 3-phosphate = D-erythrose 4-phosphate + beta-D-fructose 6-phosphate. It participates in carbohydrate degradation; pentose phosphate pathway; D-glyceraldehyde 3-phosphate and beta-D-fructose 6-phosphate from D-ribose 5-phosphate and D-xylulose 5-phosphate (non-oxidative stage): step 2/3. Its function is as follows. Transaldolase is important for the balance of metabolites in the pentose-phosphate pathway. This chain is Transaldolase, found in Trichormus variabilis (strain ATCC 29413 / PCC 7937) (Anabaena variabilis).